We begin with the raw amino-acid sequence, 220 residues long: Octanoyltransferase (220 aa).

The 181-residue stretch at 31 to 211 folds into the BPL/LPL catalytic domain; it reads GTAADHLLLL…HFARIFDFEM (181 aa). Substrate is bound by residues 76 to 83, 143 to 145, and 156 to 158; these read RGGDVTYH, AIG, and GFA. Catalysis depends on Cys174, which acts as the Acyl-thioester intermediate.

The protein belongs to the LipB family.

It localises to the cytoplasm. The enzyme catalyses octanoyl-[ACP] + L-lysyl-[protein] = N(6)-octanoyl-L-lysyl-[protein] + holo-[ACP] + H(+). The protein operates within protein modification; protein lipoylation via endogenous pathway; protein N(6)-(lipoyl)lysine from octanoyl-[acyl-carrier-protein]: step 1/2. In terms of biological role, catalyzes the transfer of endogenously produced octanoic acid from octanoyl-acyl-carrier-protein onto the lipoyl domains of lipoate-dependent enzymes. Lipoyl-ACP can also act as a substrate although octanoyl-ACP is likely to be the physiological substrate. The sequence is that of Octanoyltransferase from Solibacter usitatus (strain Ellin6076).